Here is a 126-residue protein sequence, read N- to C-terminus: Holo-[acyl-carrier-protein] synthase (126 aa).

2 residues coordinate Mg(2+): D9 and E58.

It belongs to the P-Pant transferase superfamily. AcpS family. It depends on Mg(2+) as a cofactor.

It localises to the cytoplasm. It carries out the reaction apo-[ACP] + CoA = holo-[ACP] + adenosine 3',5'-bisphosphate + H(+). Its function is as follows. Transfers the 4'-phosphopantetheine moiety from coenzyme A to a Ser of acyl-carrier-protein. This chain is Holo-[acyl-carrier-protein] synthase, found in Escherichia coli (strain K12 / MC4100 / BW2952).